We begin with the raw amino-acid sequence, 1362 residues long: Dicer-like protein 2-2 (1362 aa).

The Helicase ATP-binding domain occupies 30 to 197 (MLNESLKRNL…EIVESNLGSI (168 aa)). 43–50 (MPTGTGKT) is an ATP binding site. A DEAH box motif is present at residues 139-142 (DEAH). The Helicase C-terminal domain occupies 343 to 505 (LLDELSKAYR…KLQNAERRQI (163 aa)). Residues 536–630 (AVGYLYNFCS…VPTQVSDHLE (95 aa)) enclose the Dicer dsRNA-binding fold domain. 2 RNase III domains span residues 889–1033 (AQIL…TDGG) and 1075–1258 (IVDM…IDSQ).

Belongs to the helicase family. Dicer subfamily.

Functionally, dicer-like endonuclease involved in cleaving double-stranded RNA in the RNA interference (RNAi) pathway. Produces 21 to 25 bp dsRNAs (siRNAs) which target the selective destruction of homologous RNAs leading to sequence-specific suppression of gene expression, called post-transcriptional gene silencing (PTGS). Part of a broad host defense response against viral infection and transposons. The sequence is that of Dicer-like protein 2-2 (dcl2-2) from Aspergillus niger (strain ATCC MYA-4892 / CBS 513.88 / FGSC A1513).